Consider the following 100-residue polypeptide: Urease subunit gamma (100 aa).

It belongs to the urease gamma subunit family. As to quaternary structure, heterotrimer of UreA (gamma), UreB (beta) and UreC (alpha) subunits. Three heterotrimers associate to form the active enzyme.

It is found in the cytoplasm. It carries out the reaction urea + 2 H2O + H(+) = hydrogencarbonate + 2 NH4(+). It functions in the pathway nitrogen metabolism; urea degradation; CO(2) and NH(3) from urea (urease route): step 1/1. This is Urease subunit gamma from Azoarcus sp. (strain BH72).